The chain runs to 217 residues: Ribonuclease T (217 aa).

An Exonuclease domain is found at 20–194 (VVIDVETGGF…YDTDRTAELF (175 aa)). Positions 23, 25, 181, and 186 each coordinate Mg(2+). The Proton donor/acceptor role is filled by H181.

Belongs to the RNase T family. As to quaternary structure, homodimer. It depends on Mg(2+) as a cofactor.

Its function is as follows. Trims short 3' overhangs of a variety of RNA species, leaving a one or two nucleotide 3' overhang. Responsible for the end-turnover of tRNA: specifically removes the terminal AMP residue from uncharged tRNA (tRNA-C-C-A). Also appears to be involved in tRNA biosynthesis. In Photorhabdus laumondii subsp. laumondii (strain DSM 15139 / CIP 105565 / TT01) (Photorhabdus luminescens subsp. laumondii), this protein is Ribonuclease T.